A 178-amino-acid chain; its full sequence is C-phycoerythrin class 2 subunit beta (178 aa).

The phycourobilin site is built by cysteine 50 and cysteine 61. (2R,3E)-phycoerythrobilin is bound by residues cysteine 82 and cysteine 159.

The protein belongs to the phycobiliprotein family. In terms of assembly, heterodimer of an alpha and a beta chain. Post-translationally, contains two covalently linked phycoerythrobilin chromophores and one covalently linked phycourobilin chromophore.

Its subcellular location is the cellular thylakoid membrane. In terms of biological role, light-harvesting photosynthetic bile pigment-protein from the phycobiliprotein complex. The protein is C-phycoerythrin class 2 subunit beta (mpeB) of Synechococcus sp. (strain WH8020).